The sequence spans 315 residues: Olfactory receptor 5M1 (315 aa).

The Extracellular segment spans residues M1–K25. N-linked (GlcNAc...) asparagine glycosylation occurs at N5. A helical transmembrane segment spans residues I26–I46. The Cytoplasmic portion of the chain corresponds to L47 to H54. A helical transmembrane segment spans residues L55 to S75. The Extracellular segment spans residues N76–T99. The cysteines at positions 97 and 189 are disulfide-linked. Residues Q100–L120 traverse the membrane as a helical segment. The Cytoplasmic portion of the chain corresponds to D121–N139. A helical transmembrane segment spans residues I140–S160. Residues L161–K196 are Extracellular-facing. Residues M197–S217 traverse the membrane as a helical segment. The Cytoplasmic segment spans residues Y218–A237. A helical transmembrane segment spans residues F238–M258. The Extracellular portion of the chain corresponds to Y259–S271. Residues K272–L292 traverse the membrane as a helical segment. Topologically, residues R293 to V315 are cytoplasmic.

The protein belongs to the G-protein coupled receptor 1 family.

It is found in the cell membrane. Functionally, odorant receptor. This chain is Olfactory receptor 5M1 (OR5M1), found in Homo sapiens (Human).